Here is a 248-residue protein sequence, read N- to C-terminus: Phosphatidylglycerol--prolipoprotein diacylglyceryl transferase (248 aa).

3 consecutive transmembrane segments (helical) span residues 6-26 (FSIF…GVIL), 48-68 (ILVW…VIFE), and 84-104 (GGGL…YVIC). Arg-130 contacts a 1,2-diacyl-sn-glycero-3-phospho-(1'-sn-glycerol). 2 helical membrane passes run 187–207 (GQIT…VEGL) and 214–234 (IGAL…GVIL).

It belongs to the Lgt family.

It is found in the cell membrane. It catalyses the reaction L-cysteinyl-[prolipoprotein] + a 1,2-diacyl-sn-glycero-3-phospho-(1'-sn-glycerol) = an S-1,2-diacyl-sn-glyceryl-L-cysteinyl-[prolipoprotein] + sn-glycerol 1-phosphate + H(+). The protein operates within protein modification; lipoprotein biosynthesis (diacylglyceryl transfer). In terms of biological role, catalyzes the transfer of the diacylglyceryl group from phosphatidylglycerol to the sulfhydryl group of the N-terminal cysteine of a prolipoprotein, the first step in the formation of mature lipoproteins. The polypeptide is Phosphatidylglycerol--prolipoprotein diacylglyceryl transferase (Finegoldia magna (strain ATCC 29328 / DSM 20472 / WAL 2508) (Peptostreptococcus magnus)).